The following is a 216-amino-acid chain: Octanoyltransferase (216 aa).

The BPL/LPL catalytic domain maps to 33-216 (AQTADELWIV…AEKLTRHLSG (184 aa)). Substrate-binding positions include 72-79 (RGGEVTYH), 148-150 (ALG), and 162-164 (GVS). The Acyl-thioester intermediate role is filled by Cys180.

The protein belongs to the LipB family.

Its subcellular location is the cytoplasm. It carries out the reaction octanoyl-[ACP] + L-lysyl-[protein] = N(6)-octanoyl-L-lysyl-[protein] + holo-[ACP] + H(+). It functions in the pathway protein modification; protein lipoylation via endogenous pathway; protein N(6)-(lipoyl)lysine from octanoyl-[acyl-carrier-protein]: step 1/2. Its function is as follows. Catalyzes the transfer of endogenously produced octanoic acid from octanoyl-acyl-carrier-protein onto the lipoyl domains of lipoate-dependent enzymes. Lipoyl-ACP can also act as a substrate although octanoyl-ACP is likely to be the physiological substrate. This Herminiimonas arsenicoxydans protein is Octanoyltransferase.